We begin with the raw amino-acid sequence, 745 residues long: 1,4-alpha-glucan branching enzyme GlgB (745 aa).

Catalysis depends on Asp416, which acts as the Nucleophile. Residue Glu469 is the Proton donor of the active site.

Belongs to the glycosyl hydrolase 13 family. GlgB subfamily. As to quaternary structure, monomer.

The catalysed reaction is Transfers a segment of a (1-&gt;4)-alpha-D-glucan chain to a primary hydroxy group in a similar glucan chain.. Its pathway is glycan biosynthesis; glycogen biosynthesis. Catalyzes the formation of the alpha-1,6-glucosidic linkages in glycogen by scission of a 1,4-alpha-linked oligosaccharide from growing alpha-1,4-glucan chains and the subsequent attachment of the oligosaccharide to the alpha-1,6 position. This Shewanella sp. (strain MR-7) protein is 1,4-alpha-glucan branching enzyme GlgB.